The chain runs to 208 residues: Redox-sensing transcriptional repressor Rex (208 aa).

The H-T-H motif DNA-binding region spans 18–57; sequence IYYRYFKLLETDGIERIKSEQLAKLVAIPSATIRRDFSYI. 92–97 is an NAD(+) binding site; it reads GVGNLG.

It belongs to the transcriptional regulatory Rex family. In terms of assembly, homodimer.

The protein resides in the cytoplasm. In terms of biological role, modulates transcription in response to changes in cellular NADH/NAD(+) redox state. In Latilactobacillus sakei subsp. sakei (strain 23K) (Lactobacillus sakei subsp. sakei), this protein is Redox-sensing transcriptional repressor Rex.